Consider the following 205-residue polypeptide: High frequency lysogenization protein HflD homolog (205 aa).

It belongs to the HflD family.

The protein resides in the cytoplasm. It is found in the cell inner membrane. The protein is High frequency lysogenization protein HflD homolog of Vibrio parahaemolyticus serotype O3:K6 (strain RIMD 2210633).